Here is a 452-residue protein sequence, read N- to C-terminus: Bifunctional protein GlmU (452 aa).

A pyrophosphorylase region spans residues 1–232; sequence MTTRTSLTIV…EDEVRGINTK (232 aa). Residues 11 to 14, K25, Q78, and 83 to 84 contribute to the UDP-N-acetyl-alpha-D-glucosamine site; these read LAAG and GT. Residue D108 coordinates Mg(2+). Residues G144, E158, N173, and N230 each contribute to the UDP-N-acetyl-alpha-D-glucosamine site. Residue N230 coordinates Mg(2+). A linker region spans residues 233–253; that stretch reads AQLAEAEAVMQTRLRQAAMTA. The interval 254–452 is N-acetyltransferase; that stretch reads GVTLISPETI…SARARKPKTS (199 aa). R319 and K337 together coordinate UDP-N-acetyl-alpha-D-glucosamine. Residue H349 is the Proton acceptor of the active site. Residues Y352 and N363 each contribute to the UDP-N-acetyl-alpha-D-glucosamine site. Residues A366, 372 to 373, S391, S409, and R426 each bind acetyl-CoA; that span reads NY.

It in the N-terminal section; belongs to the N-acetylglucosamine-1-phosphate uridyltransferase family. In the C-terminal section; belongs to the transferase hexapeptide repeat family. Homotrimer. It depends on Mg(2+) as a cofactor.

Its subcellular location is the cytoplasm. It catalyses the reaction alpha-D-glucosamine 1-phosphate + acetyl-CoA = N-acetyl-alpha-D-glucosamine 1-phosphate + CoA + H(+). The enzyme catalyses N-acetyl-alpha-D-glucosamine 1-phosphate + UTP + H(+) = UDP-N-acetyl-alpha-D-glucosamine + diphosphate. Its pathway is nucleotide-sugar biosynthesis; UDP-N-acetyl-alpha-D-glucosamine biosynthesis; N-acetyl-alpha-D-glucosamine 1-phosphate from alpha-D-glucosamine 6-phosphate (route II): step 2/2. It functions in the pathway nucleotide-sugar biosynthesis; UDP-N-acetyl-alpha-D-glucosamine biosynthesis; UDP-N-acetyl-alpha-D-glucosamine from N-acetyl-alpha-D-glucosamine 1-phosphate: step 1/1. It participates in bacterial outer membrane biogenesis; LPS lipid A biosynthesis. Its function is as follows. Catalyzes the last two sequential reactions in the de novo biosynthetic pathway for UDP-N-acetylglucosamine (UDP-GlcNAc). The C-terminal domain catalyzes the transfer of acetyl group from acetyl coenzyme A to glucosamine-1-phosphate (GlcN-1-P) to produce N-acetylglucosamine-1-phosphate (GlcNAc-1-P), which is converted into UDP-GlcNAc by the transfer of uridine 5-monophosphate (from uridine 5-triphosphate), a reaction catalyzed by the N-terminal domain. This Rhodopseudomonas palustris (strain BisB5) protein is Bifunctional protein GlmU.